Here is a 317-residue protein sequence, read N- to C-terminus: MAAAAAATEQQSSNGPVKKSMREKAVERRNVNKEHNSNFKAGYIPIDEDRLHKTGLRGRKGNLAICVIVLLFILAVINLIITLVIWAVIRIGPNGCDSMEFHESGLLRFKQVSDMGVIHPLYKSTVGGRRNENLVITGNNQPIVFQQGTTKLSVGKNKTSITSDTGMQFFDPRTQNILFSTDYETHEFHLPSGVKSLNVQKASTERITSNATSDLNIKVGGRAIVRGNEGVFIMGKTIQFHMGGNMELKAENSIILNGTVMVSTNRLPSSSSGDQFGGDDWVRYKLCMCADGTLFRVQVTGQNMGCQTSDNPCGDLY.

A disordered region spans residues 1–31 (MAAAAAATEQQSSNGPVKKSMREKAVERRNV). Over 1-64 (MAAAAAATEQ…GLRGRKGNLA (64 aa)) the chain is Cytoplasmic. Positions 20–31 (SMREKAVERRNV) are enriched in basic and acidic residues. A helical; Signal-anchor for type II membrane protein membrane pass occupies residues 65-85 (ICVIVLLFILAVINLIITLVI). Topologically, residues 86 to 317 (WAVIRIGPNG…TSDNPCGDLY (232 aa)) are extracellular. N-linked (GlcNAc...) asparagine glycans are attached at residues N157, N210, and N257. Disulfide bonds link C287–C313 and C289–C306.

The protein belongs to the sarcoglycan beta/delta/gamma/zeta family. In terms of assembly, cross-link to form 2 major subcomplexes: one consisting of SGCB, SGCD and SGCG and the other consisting of SGCB and SGCD. The association between SGCB and SGCG is particularly strong while SGCA is loosely associated with the other sarcoglycans. Post-translationally, disulfide bonds are present.

The protein resides in the cell membrane. Its subcellular location is the sarcolemma. The protein localises to the cytoplasm. It is found in the cytoskeleton. In terms of biological role, component of the sarcoglycan complex, a subcomplex of the dystrophin-glycoprotein complex which forms a link between the F-actin cytoskeleton and the extracellular matrix. This is Beta-sarcoglycan (SGCB) from Bos taurus (Bovine).